Reading from the N-terminus, the 474-residue chain is Lipoprotein lipase (474 aa).

Positions 1–27 are cleaved as a signal peptide; that stretch reads MESKALLLVVLGVWLQSLTAFRGGVAA. The interval 32–53 is interaction with GPIHBP1; the sequence is RDFSDIESKFALRTPEDTAEDT. Residues cysteine 54 and cysteine 67 are joined by a disulfide bond. Asparagine 70 carries N-linked (GlcNAc...) asparagine glycosylation. Tyrosine 121 is modified (3'-nitrotyrosine). The Nucleophile role is filled by serine 159. The active-site Charge relay system is aspartate 183. Tyrosine 191 bears the 3'-nitrotyrosine mark. Residues alanine 194, arginine 197, serine 199, and aspartate 202 each coordinate Ca(2+). Cysteine 243 and cysteine 266 are joined by a disulfide. An essential for determining substrate specificity region spans residues 243 to 266; it reads CNIGEAIRVIAERGLGDVDQLVKC. Histidine 268 acts as the Charge relay system in catalysis. Disulfide bonds link cysteine 291-cysteine 310 and cysteine 302-cysteine 305. Residues 341–464 enclose the PLAT domain; the sequence is FHYQVKIHFS…KGKDSAVFVK (124 aa). Residue tyrosine 343 is modified to 3'-nitrotyrosine. N-linked (GlcNAc...) asparagine glycosylation is present at asparagine 386. Residues 417–421 are important for interaction with lipoprotein particles; sequence WPDWW. Positions 430 to 434 are important for heparin binding; the sequence is RIRVK. Positions 443–467 are interaction with GPIHBP1; it reads IFCAREKVSHLQKGKDSAVFVKCHD. An intrachain disulfide couples cysteine 445 to cysteine 465.

Belongs to the AB hydrolase superfamily. Lipase family. As to quaternary structure, homodimer. Interacts with GPIHBP1 with 1:1 stoichiometry. Interacts with APOC2; the interaction activates LPL activity in the presence of lipids. Interaction with heparan sulfate proteoglycans is required to protect LPL against loss of activity. Associates with lipoprotein particles in blood plasma. Interacts with LMF1 and SEL1L; interaction with SEL1L is required to prevent aggregation of newly synthesized LPL in the endoplasmic reticulum (ER), and for normal export of LPL from the ER to the extracellular space. Interacts with SORL1; SORL1 acts as a sorting receptor, promoting LPL localization to endosomes and later to lysosomes, leading to degradation of newly synthesized LPL. In terms of processing, tyrosine nitration after lipopolysaccharide (LPS) challenge down-regulates the lipase activity. N-glycosylated. As to expression, detected in white and brown adipose tissue and heart muscle, especially at the lumenal surface of capillaries. Detected on capillary endothelium in the lactating mammary gland. Detected in blood plasma (at protein level). Expressed in liver, epididymal fat, heart, psoas muscle, lactating mammary gland, adrenal, lung, and ovary. Highest levels in heart and adrenal gland.

Its subcellular location is the cell membrane. It localises to the secreted. It is found in the extracellular space. The protein localises to the extracellular matrix. The catalysed reaction is a triacylglycerol + H2O = a diacylglycerol + a fatty acid + H(+). It catalyses the reaction a 1,2-diacyl-sn-glycero-3-phosphocholine + H2O = a 2-acyl-sn-glycero-3-phosphocholine + a fatty acid + H(+). It carries out the reaction 1,2,3-tri-(9Z-octadecenoyl)-glycerol + H2O = di-(9Z)-octadecenoylglycerol + (9Z)-octadecenoate + H(+). The enzyme catalyses 1,2-di-(9Z-octadecenoyl)-sn-glycero-3-phosphocholine + H2O = (9Z-octadecenoyl)-sn-glycero-3-phosphocholine + (9Z)-octadecenoate + H(+). The catalysed reaction is 1,2,3-tributanoylglycerol + H2O = dibutanoylglycerol + butanoate + H(+). It catalyses the reaction 1,2-dihexadecanoyl-sn-glycero-3-phosphocholine + H2O = hexadecanoyl-sn-glycero-3-phosphocholine + hexadecanoate + H(+). With respect to regulation, the apolipoprotein APOC2 acts as a coactivator of LPL activity. Ca(2+) binding promotes protein stability and formation of the active homodimer. Interaction with GPIHBP1 protects LPL against inactivation by ANGPTL4. Its function is as follows. Key enzyme in triglyceride metabolism. Catalyzes the hydrolysis of triglycerides from circulating chylomicrons and very low density lipoproteins (VLDL), and thereby plays an important role in lipid clearance from the blood stream, lipid utilization and storage. Although it has both phospholipase and triglyceride lipase activities it is primarily a triglyceride lipase with low but detectable phospholipase activity. Mediates margination of triglyceride-rich lipoprotein particles in capillaries. Recruited to its site of action on vascular endothelium by binding to GPIHBP1 and cell surface heparan sulfate proteoglycans. The sequence is that of Lipoprotein lipase (Lpl) from Mus musculus (Mouse).